The chain runs to 695 residues: Elongation factor G (695 aa).

A tr-type G domain is found at Ser5–Thr280. Residues Ala14–Thr21, Asp78–His82, and Asn132–Asp135 each bind GTP. Residues Pro279–Val299 are disordered.

It belongs to the TRAFAC class translation factor GTPase superfamily. Classic translation factor GTPase family. EF-G/EF-2 subfamily.

Its subcellular location is the cytoplasm. Its function is as follows. Catalyzes the GTP-dependent ribosomal translocation step during translation elongation. During this step, the ribosome changes from the pre-translocational (PRE) to the post-translocational (POST) state as the newly formed A-site-bound peptidyl-tRNA and P-site-bound deacylated tRNA move to the P and E sites, respectively. Catalyzes the coordinated movement of the two tRNA molecules, the mRNA and conformational changes in the ribosome. In Alteromonas mediterranea (strain DSM 17117 / CIP 110805 / LMG 28347 / Deep ecotype), this protein is Elongation factor G.